The primary structure comprises 278 residues: Adenosylcobinamide-GDP ribazoletransferase (278 aa).

The next 6 membrane-spanning stretches (helical) occupy residues 44–64, 69–89, 121–141, 161–181, 204–224, and 227–247; these read GIGV…QLLL, FTPL…TGGF, AFGA…LALL, VCAA…VMIW, GGLA…SLAL, and INLI…LRFF.

The protein belongs to the CobS family. It depends on Mg(2+) as a cofactor.

The protein resides in the cell inner membrane. It carries out the reaction alpha-ribazole + adenosylcob(III)inamide-GDP = adenosylcob(III)alamin + GMP + H(+). The catalysed reaction is alpha-ribazole 5'-phosphate + adenosylcob(III)inamide-GDP = adenosylcob(III)alamin 5'-phosphate + GMP + H(+). Its pathway is cofactor biosynthesis; adenosylcobalamin biosynthesis; adenosylcobalamin from cob(II)yrinate a,c-diamide: step 7/7. Functionally, joins adenosylcobinamide-GDP and alpha-ribazole to generate adenosylcobalamin (Ado-cobalamin). Also synthesizes adenosylcobalamin 5'-phosphate from adenosylcobinamide-GDP and alpha-ribazole 5'-phosphate. The protein is Adenosylcobinamide-GDP ribazoletransferase of Polaromonas naphthalenivorans (strain CJ2).